The chain runs to 24 residues: MQKTKMIFTIGPASXTEEMLVXFI.

This sequence belongs to the pyruvate kinase family. In terms of assembly, homotetramer. Mg(2+) serves as cofactor. Requires K(+) as cofactor.

It carries out the reaction pyruvate + ATP = phosphoenolpyruvate + ADP + H(+). It participates in carbohydrate degradation; glycolysis; pyruvate from D-glyceraldehyde 3-phosphate: step 5/5. This is Pyruvate kinase (pyk) from Clostridium pasteurianum.